A 579-amino-acid polypeptide reads, in one-letter code: Basic helix-loop-helix ARNT-like protein 2 (579 aa).

The tract at residues 1–198 (MEFPRKRRGR…SPREKPIDTK (198 aa)) is interaction with PER2. Residues 4-9 (PRKRRG) carry the Nuclear localization signal motif. The segment at 40–61 (RTGVSAPSGIREAHSQMEKRRR) is disordered. Positions 48–101 (GIREAHSQMEKRRRDKMNHLIQKLSSMIPPHIPTAHKLDKLSVLRRAVQYLRSL) constitute a bHLH domain. A compositionally biased stretch (basic and acidic residues) spans 50 to 59 (REAHSQMEKR). The Nuclear export signal 1 signature appears at 118 to 128 (IQDKELSHLIL). In terms of domain architecture, PAS 1 spans 119–190 (QDKELSHLIL…KEQLSCDGSP (72 aa)). Basic and acidic residues predominate over residues 186-196 (CDGSPREKPID). Residues 186–213 (CDGSPREKPIDTKTSQVYSHPYTGRPRM) are disordered. A Glycyl lysine isopeptide (Lys-Gly) (interchain with G-Cter in SUMO2 and SUMO3) cross-link involves residue Lys-226. Residue Lys-233 forms a Glycyl lysine isopeptide (Lys-Gly) (interchain with G-Cter in SUMO2) linkage. Residues 296 to 366 (VPQKSGKINV…DKHKAVLQSK (71 aa)) form the PAS 2 domain. The Nuclear export signal 2 motif lies at 331–339 (LGYLPQELL). The PAC domain maps to 371-414 (TDSYKFRVKDGAFVTLKSEWFSFTNPWTKELEYIVSVNTLVLGR). Residues 469–536 (RLHSSSPEDA…AHPHGPLPGD (68 aa)) are disordered.

As to quaternary structure, component of the circadian core oscillator, which includes the CRY proteins, CLOCK, or NPAS2, BMAL1 or BMAL2, CSNK1D and/or CSNK1E, TIMELESS and the PER proteins. Interacts directly with CLOCK to form the BMAL2-CLOCK transactivator. Can form heterodimers or homodimers which interact directly with CLOCK to form the transcription activator. Interacts with NPAS2 and HIF1A. Interacts with PER2. As to expression, expressed in the suprachiasmatic nucleus (SCN).

It is found in the nucleus. Its function is as follows. Transcriptional activator which forms a core component of the circadian clock. The circadian clock, an internal time-keeping system, regulates various physiological processes through the generation of approximately 24 hour circadian rhythms in gene expression, which are translated into rhythms in metabolism and behavior. It is derived from the Latin roots 'circa' (about) and 'diem' (day) and acts as an important regulator of a wide array of physiological functions including metabolism, sleep, body temperature, blood pressure, endocrine, immune, cardiovascular, and renal function. Consists of two major components: the central clock, residing in the suprachiasmatic nucleus (SCN) of the brain, and the peripheral clocks that are present in nearly every tissue and organ system. Both the central and peripheral clocks can be reset by environmental cues, also known as Zeitgebers (German for 'timegivers'). The predominant Zeitgeber for the central clock is light, which is sensed by retina and signals directly to the SCN. The central clock entrains the peripheral clocks through neuronal and hormonal signals, body temperature and feeding-related cues, aligning all clocks with the external light/dark cycle. Circadian rhythms allow an organism to achieve temporal homeostasis with its environment at the molecular level by regulating gene expression to create a peak of protein expression once every 24 hours to control when a particular physiological process is most active with respect to the solar day. Transcription and translation of core clock components (CLOCK, NPAS2, BMAL1, BMAL2, PER1, PER2, PER3, CRY1 and CRY2) plays a critical role in rhythm generation, whereas delays imposed by post-translational modifications (PTMs) are important for determining the period (tau) of the rhythms (tau refers to the period of a rhythm and is the length, in time, of one complete cycle). A diurnal rhythm is synchronized with the day/night cycle, while the ultradian and infradian rhythms have a period shorter and longer than 24 hours, respectively. Disruptions in the circadian rhythms contribute to the pathology of cardiovascular diseases, cancer, metabolic syndromes and aging. A transcription/translation feedback loop (TTFL) forms the core of the molecular circadian clock mechanism. Transcription factors, CLOCK or NPAS2 and BMAL1 or BMAL2, form the positive limb of the feedback loop, act in the form of a heterodimer and activate the transcription of core clock genes and clock-controlled genes (involved in key metabolic processes), harboring E-box elements (5'-CACGTG-3') within their promoters. The core clock genes: PER1/2/3 and CRY1/2 which are transcriptional repressors form the negative limb of the feedback loop and interact with the CLOCK|NPAS2-BMAL1|BMAL2 heterodimer inhibiting its activity and thereby negatively regulating their own expression. This heterodimer also activates nuclear receptors NR1D1/2 and RORA/B/G, which form a second feedback loop and which activate and repress BMAL1 transcription, respectively. The CLOCK-BMAL2 heterodimer activates the transcription of SERPINE1/PAI1 and BHLHE40/DEC1. This is Basic helix-loop-helix ARNT-like protein 2 (Bmal2) from Mus musculus (Mouse).